We begin with the raw amino-acid sequence, 319 residues long: Carbonic anhydrase, chloroplastic (319 aa).

Residues 1 to 98 (MSTINGCLTS…AASKVAQITS (98 aa)) constitute a chloroplast transit peptide.

This sequence belongs to the beta-class carbonic anhydrase family. As to quaternary structure, homohexamer.

Its subcellular location is the plastid. The protein localises to the chloroplast stroma. It carries out the reaction hydrogencarbonate + H(+) = CO2 + H2O. In terms of biological role, reversible hydration of carbon dioxide. The protein is Carbonic anhydrase, chloroplastic of Spinacia oleracea (Spinach).